The chain runs to 154 residues: Ribonuclease H (154 aa).

Residues 1–142 (MTKHVEIFTD…CDELARTAAE (142 aa)) form the RNase H type-1 domain. Residues Asp10, Glu48, Asp70, and Asp134 each contribute to the Mg(2+) site.

The protein belongs to the RNase H family. In terms of assembly, monomer. It depends on Mg(2+) as a cofactor.

It localises to the cytoplasm. It catalyses the reaction Endonucleolytic cleavage to 5'-phosphomonoester.. Endonuclease that specifically degrades the RNA of RNA-DNA hybrids. This chain is Ribonuclease H, found in Vibrio campbellii (strain ATCC BAA-1116).